Here is a 247-residue protein sequence, read N- to C-terminus: Probable phosphatase swp_1620 (247 aa).

Residues H8, H10, H16, H41, E74, H102, H132, D193, and H195 each coordinate Zn(2+).

This sequence belongs to the PHP family. Zn(2+) is required as a cofactor.

The chain is Probable phosphatase swp_1620 from Shewanella piezotolerans (strain WP3 / JCM 13877).